Consider the following 439-residue polypeptide: MMAVPSRCSLGVAPLVAMVGGGQLARMTHQAAIALGQTLRVLATAADEPAAQVTPDVVIGSHTDLEDLRRVALGADALTFDHEHVPTELLDKLVAEGINVAPSPQALVHAQDKLVMRRRLAALGAAMPRFMALDSVDDLAEIDAFAQRLTGSKDAPMVVKAVRGGYDGRGVQMVRDSAHAREVASGYLVDGMPVLVEERVELRRELSALVARSPFGQGAAWPVVETVQRDGICVLVVAPALALADDLASAAQQLALRLAAELGVVGVFAVELFETADGALLVNELAMRPHNSGHWTMDGARTSQFEQHLRAVLDYPLGETDAVAPVTVMVNVLGAPQPPTLSVVTMDERLHHLFARMPDARVHLYDKVERPGRKVGHINFRGTDKDRKNPTKLRERAELAAHWLSHGQWTDGWDPHRAGDDVVEISLACGGRNDAQRQR.

Residues K113, K160, E197–V200, E205, and N283–E284 contribute to the ATP site. The ATP-grasp domain maps to R117 to L313.

This sequence belongs to the PurK/PurT family. As to quaternary structure, homodimer.

It carries out the reaction 5-amino-1-(5-phospho-beta-D-ribosyl)imidazole + hydrogencarbonate + ATP = 5-carboxyamino-1-(5-phospho-D-ribosyl)imidazole + ADP + phosphate + 2 H(+). The protein operates within purine metabolism; IMP biosynthesis via de novo pathway; 5-amino-1-(5-phospho-D-ribosyl)imidazole-4-carboxylate from 5-amino-1-(5-phospho-D-ribosyl)imidazole (N5-CAIR route): step 1/2. Catalyzes the ATP-dependent conversion of 5-aminoimidazole ribonucleotide (AIR) and HCO(3)(-) to N5-carboxyaminoimidazole ribonucleotide (N5-CAIR). The sequence is that of N5-carboxyaminoimidazole ribonucleotide synthase from Mycobacterium leprae (strain TN).